The chain runs to 156 residues: Ribosomal RNA large subunit methyltransferase H (156 aa).

S-adenosyl-L-methionine is bound by residues G104 and 123-128 (LSALTL).

Belongs to the RNA methyltransferase RlmH family. Homodimer.

The protein resides in the cytoplasm. It carries out the reaction pseudouridine(1915) in 23S rRNA + S-adenosyl-L-methionine = N(3)-methylpseudouridine(1915) in 23S rRNA + S-adenosyl-L-homocysteine + H(+). In terms of biological role, specifically methylates the pseudouridine at position 1915 (m3Psi1915) in 23S rRNA. The protein is Ribosomal RNA large subunit methyltransferase H of Nitrosospira multiformis (strain ATCC 25196 / NCIMB 11849 / C 71).